The following is a 226-amino-acid chain: uncharacterized protein (226 aa).

Residues 168 to 226 (ISALRNKLGLTQTDLGKRINVDANVIRNIETGDLVAFNVQDPMVRSLAYALGIRTIKYQ) enclose the HTH cro/C1-type domain. The H-T-H motif DNA-binding region spans 179-198 (QTDLGKRINVDANVIRNIET).

This is an uncharacterized protein from Acanthamoeba polyphaga mimivirus (APMV).